Reading from the N-terminus, the 141-residue chain is Hemoglobin subunit alpha (141 aa).

Residues 1–141 enclose the Globin domain; it reads VLSSDDKCNV…VSSVLTSKYR (141 aa). Residue H58 coordinates O2. Heme b is bound at residue H87.

Belongs to the globin family. As to quaternary structure, heterotetramer of two alpha chains and two beta chains. In terms of tissue distribution, red blood cells.

In terms of biological role, involved in oxygen transport from the lung to the various peripheral tissues. This Crocodylus niloticus (Nile crocodile) protein is Hemoglobin subunit alpha (HBA).